The chain runs to 85 residues: Dual endothelin-1/VEGF signal peptide receptor (85 aa).

Residues 1–18 (MTMFKGSNEMKSRWNWGS) are Extracellular-facing. The helical transmembrane segment at 19–37 (ITCIICFTCVGSQLSMSSS) threads the bilayer. The Cytoplasmic segment spans residues 38-85 (KASNFSGPLQLYQRELEIFIVLTDVPNYRLIKENSHLHTTIVDQGRTV).

N-glycosylated. As to expression, expressed in kidney. Expressed in endothelial cells.

The protein localises to the cell membrane. Its function is as follows. Dual receptor for both endothelin-1 and the signal sequence of vascular endothelial growth factor A. Does not act as a receptor for angiotensin-2. Does not bind the VEGFA mature protein. May play a role in angiogenesis with a significant role in cardiovascular and neural development. This is Dual endothelin-1/VEGF signal peptide receptor from Homo sapiens (Human).